Reading from the N-terminus, the 641-residue chain is Transcription termination factor MTERF2, chloroplastic (641 aa).

Disordered regions lie at residues 54–80 and 606–641; these read LKLN…DLDG and FEAG…DLTE. Residues 610-641 are compositionally biased toward acidic residues; it reads LDSEDSQPSDENISDQEIAFSDEAEEEEDLTE.

The protein belongs to the mTERF family.

The protein resides in the plastid. The protein localises to the chloroplast. Transcription termination factor involved in processing of plastid transcripts. Essential for embryogenesis. In Arabidopsis thaliana (Mouse-ear cress), this protein is Transcription termination factor MTERF2, chloroplastic.